The chain runs to 537 residues: MNKLVECVPNFSEGRDQTIIDAISKAIRDTAGCTLLDVDPGKSTNRTVYTFVGCPDSIVNGAINATKVAFKLIDMTKHHGEHPRMGALDVCPFVPVRNVTMEECVNCSKEFGKRISEEIGVPIFLYEEASTQSYRKQLKQIRQGEYEGLEEKLKEEKWKPDFGPAKFIPSYGASVTGARSFLIAYNVNILGTKEQAHRIALNVREAGRGDNEPGRLKFLKGIGWFVDEYNLAQVSMNLDNYRETGVHTVFEECSKDARELNLGVAGSEIVGLVPLEAILMAADYYIAKENLFIIDEALKVRLAIERLGLSSCSFFDPKKRIIDYMVQEDLKVTQPLASMSVRGFVELLGSRTPAPGGGSASALIAAMGAGLGAMTGWMTFGKKKFEALDSIMRELLPPLDKAMRDLIPYIDADTNAFNDYIKAMGTPKGPQRDIAIDKALKQAINIPLSTMKISNTCWGPLLKMAQYGNLASKSDLEVGCKSLETGIWGAHRNVSINLLDCKDAQFVESTTKEANEILKNAQESLQKVLEILSNRKE.

Residues 1 to 181 (MNKLVECVPN…GASVTGARSF (181 aa)) are formiminotransferase N-subdomain. The For formimidoyltransferase activity role is filled by His82. 163-172 (GPAKFIPSYG) is a folate binding site. A formiminotransferase C-subdomain region spans residues 182–326 (LIAYNVNILG…PKKRIIDYMV (145 aa)). The tract at residues 327 to 335 (QEDLKVTQP) is linker. The cyclodeaminase/cyclohydrolase stretch occupies residues 336 to 537 (LASMSVRGFV…VLEILSNRKE (202 aa)). The active-site For cyclodeaminase activity is Asp413.

It in the C-terminal section; belongs to the cyclodeaminase/cyclohydrolase family. This sequence in the N-terminal section; belongs to the formiminotransferase family. Homooctamer, including four polyglutamate binding sites. The subunits are arranged as a tetramer of dimers, and form a planar ring-shaped structure.

Its subcellular location is the cytoplasm. The protein localises to the cytosol. It is found in the golgi apparatus. It localises to the cytoskeleton. The protein resides in the microtubule organizing center. Its subcellular location is the centrosome. The protein localises to the centriole. The catalysed reaction is 5-formimidoyltetrahydrofolate + L-glutamate = N-formimidoyl-L-glutamate + (6S)-5,6,7,8-tetrahydrofolate. It catalyses the reaction 5-formimidoyltetrahydrofolate + 2 H(+) = (6R)-5,10-methenyltetrahydrofolate + NH4(+). Its pathway is amino-acid degradation; L-histidine degradation into L-glutamate; L-glutamate from N-formimidoyl-L-glutamate (transferase route): step 1/1. Folate-dependent enzyme, that displays both transferase and deaminase activity. Serves to channel one-carbon units from formiminoglutamate to the folate pool. The polypeptide is Formimidoyltransferase-cyclodeaminase (ftcd) (Dictyostelium discoideum (Social amoeba)).